A 580-amino-acid chain; its full sequence is Cytochrome P450 monooxygenase helB1 (580 aa).

A disordered region spans residues 1-32; it reads MRTYAIRPVSNRLPGPIEPKKHRRDRDNSTTG. N-linked (GlcNAc...) asparagine glycosylation is present at asparagine 28. The helical transmembrane segment at 61 to 81 threads the bilayer; sequence FLNTISVLQVLAAIFIGALTY. Cysteine 497 is a binding site for heme.

The protein belongs to the cytochrome P450 family. Heme serves as cofactor.

It localises to the membrane. The protein operates within mycotoxin biosynthesis. In terms of biological role, cytochrome P450 monooxygenase; part of the gene cluster that mediates the biosynthesis of helvolic acid, an antibacterial nortriterpenoid. Protostadienol synthase helA cyclizes (3S)-oxidosqualene to (17Z)-protosta-17(20),24-dien-3-beta-ol (protostadienol). The synthesis of protostadienol is followed by several steps of monooxygenation, dehydrogenation, and acyl transfer to yield the final helvolic acid. Following the cyclization to the tetracyclic protostadienol by helA, cytochrome P450 monooxygenases helB1-mediated and helB2-mediated oxidation at C-4 and C-16, acyltransferase helD2-dependent acetylation of 16-OH, oxidation of C-21 by cytochrome P450 monooxygenase helB4, and short chain dehydrogenase helC-dependent oxidative decarboxylation yield the fusidane skeleton. This intermediate is further modified in three additional steps mediated by the cytochrome P450 monooxygenase helB3, the acyltransferase helD1, and the 3-ketosteroid 1-dehydrogenase helE to give helvolic acid. Compared with the late stages in the biosynthesis of helvolic acid, enzymes involved in the early stage modifications act in a relatively strict order. The hydroxylation of C-16 by helB1 and subsequent acetylation by helD2 should occur before the helB3-mediated oxidation of C-21. C-4 demethylation in fusidane-type antibiotics proceeds in an unusual manner though it is also achieved by oxidative decarboxylation. The methyl group at C-4 beta position is oxidized by helB1 and subsequently removed by the short chain dehydrogenase helC. This is Cytochrome P450 monooxygenase helB1 from Aspergillus fumigatus (strain ATCC MYA-4609 / CBS 101355 / FGSC A1100 / Af293) (Neosartorya fumigata).